Reading from the N-terminus, the 278-residue chain is Cysteine-rich repeat secretory protein 18 (278 aa).

Residues 1-32 (MYSSSSVSKRFVLVPIVVVVTTQLLLVRNVSS) form the signal peptide. 2 consecutive Gnk2-homologous domains span residues 39-147 (YLHH…SLDT) and 160-267 (PSAK…LYPF).

It belongs to the cysteine-rich repeat secretory protein family.

It localises to the secreted. This Arabidopsis thaliana (Mouse-ear cress) protein is Cysteine-rich repeat secretory protein 18 (CRRSP18).